A 162-amino-acid polypeptide reads, in one-letter code: Crossover junction endodeoxyribonuclease RuvC (162 aa).

Residues Asp8, Glu69, and His141 contribute to the active site. The Mg(2+) site is built by Asp8, Glu69, and His141.

The protein belongs to the RuvC family. In terms of assembly, homodimer which binds Holliday junction (HJ) DNA. The HJ becomes 2-fold symmetrical on binding to RuvC with unstacked arms; it has a different conformation from HJ DNA in complex with RuvA. In the full resolvosome a probable DNA-RuvA(4)-RuvB(12)-RuvC(2) complex forms which resolves the HJ. Requires Mg(2+) as cofactor.

It is found in the cytoplasm. It carries out the reaction Endonucleolytic cleavage at a junction such as a reciprocal single-stranded crossover between two homologous DNA duplexes (Holliday junction).. In terms of biological role, the RuvA-RuvB-RuvC complex processes Holliday junction (HJ) DNA during genetic recombination and DNA repair. Endonuclease that resolves HJ intermediates. Cleaves cruciform DNA by making single-stranded nicks across the HJ at symmetrical positions within the homologous arms, yielding a 5'-phosphate and a 3'-hydroxyl group; requires a central core of homology in the junction. The consensus cleavage sequence is 5'-(A/T)TT(C/G)-3'. Cleavage occurs on the 3'-side of the TT dinucleotide at the point of strand exchange. HJ branch migration catalyzed by RuvA-RuvB allows RuvC to scan DNA until it finds its consensus sequence, where it cleaves and resolves the cruciform DNA. This chain is Crossover junction endodeoxyribonuclease RuvC, found in Wolbachia sp. subsp. Brugia malayi (strain TRS).